We begin with the raw amino-acid sequence, 250 residues long: Flavin-dependent thymidylate synthase (250 aa).

Residues 7-233 (LRVQLIAKTD…PAVFADFEIA (227 aa)) form the ThyX domain. Residues S71, 95-97 (RHR), and Q103 contribute to the FAD site. DUMP is bound by residues 92–95 (ELIR), 103–107 (QLSQR), and R172. Positions 95–105 (RHRHFSYSQLS) match the ThyX motif motif. Residues 188 to 190 (NYR) and H194 contribute to the FAD site. Residue R199 coordinates dUMP. R199 acts as the Involved in ionization of N3 of dUMP, leading to its activation in catalysis.

This sequence belongs to the thymidylate synthase ThyX family. Homotetramer. Requires FAD as cofactor.

It carries out the reaction dUMP + (6R)-5,10-methylene-5,6,7,8-tetrahydrofolate + NADPH + H(+) = dTMP + (6S)-5,6,7,8-tetrahydrofolate + NADP(+). It functions in the pathway pyrimidine metabolism; dTTP biosynthesis. In terms of biological role, catalyzes the reductive methylation of 2'-deoxyuridine-5'-monophosphate (dUMP) to 2'-deoxythymidine-5'-monophosphate (dTMP) while utilizing 5,10-methylenetetrahydrofolate (mTHF) as the methyl donor, and NADPH and FADH(2) as the reductant. The sequence is that of Flavin-dependent thymidylate synthase from Mycobacterium avium (strain 104).